The chain runs to 426 residues: MLDSKLLRSNLQDVADRLASRGFALDVARIEALEEQRKTVQTRTEQLQAERNARSKSIGQAKQRGEDIAPLMADVERMGNELSSGKAELENIQSELDSILFGIPNLPHESVPVGEDEDGNVEVRRWGTPTAFDFPIKDHVALGETHGWLDFETAAKLSGARFALLRGPIARLHRALAQFMINLHTGEHGYEEAYTPYLVQAPALVGTSQLPKFEEDLFKITREGEADLYLIPTAEVSLTNIVAGEILDAKQLPLKFVAHTPCFRSEAGASGRDTRGMIRQHQFDKVEMVQVVEPSTSMEALEGLTANAEKVLQLLQLPYRVLALCTGDMGFSAVKTYDLEVWVPSQDKYREISSCSNCGDFQARRMQARFRNPETGKPELVHTLNGSGLAVGRTLVAVLENYQQADGSIRVPDVLKPYMGGLEVIG.

Residues 41 to 60 (QTRTEQLQAERNARSKSIGQ) are compositionally biased toward polar residues. The disordered stretch occupies residues 41 to 64 (QTRTEQLQAERNARSKSIGQAKQR). Residue 233–235 (TAE) coordinates L-serine. 264-266 (RSE) is a binding site for ATP. An L-serine-binding site is contributed by Glu-287. Residue 351-354 (EISS) participates in ATP binding. Ser-387 contacts L-serine.

Belongs to the class-II aminoacyl-tRNA synthetase family. Type-1 seryl-tRNA synthetase subfamily. In terms of assembly, homodimer. The tRNA molecule binds across the dimer.

It is found in the cytoplasm. The enzyme catalyses tRNA(Ser) + L-serine + ATP = L-seryl-tRNA(Ser) + AMP + diphosphate + H(+). It carries out the reaction tRNA(Sec) + L-serine + ATP = L-seryl-tRNA(Sec) + AMP + diphosphate + H(+). It functions in the pathway aminoacyl-tRNA biosynthesis; selenocysteinyl-tRNA(Sec) biosynthesis; L-seryl-tRNA(Sec) from L-serine and tRNA(Sec): step 1/1. Catalyzes the attachment of serine to tRNA(Ser). Is also able to aminoacylate tRNA(Sec) with serine, to form the misacylated tRNA L-seryl-tRNA(Sec), which will be further converted into selenocysteinyl-tRNA(Sec). The polypeptide is Serine--tRNA ligase (Pseudomonas fluorescens (strain ATCC BAA-477 / NRRL B-23932 / Pf-5)).